Reading from the N-terminus, the 114-residue chain is Putative protein TfaS (114 aa).

It belongs to the tfa family.

This Escherichia coli (strain K12) protein is Putative protein TfaS (tfaS).